Consider the following 374-residue polypeptide: UPF0496 protein At3g28270 (374 aa).

Residues 171-210 (KVLTTQFERIKKQQESLLEEVSETRKKIQDEISNLEKKTL) are a coiled coil. The next 2 helical transmembrane spans lie at 214 to 234 (VVFG…IATG) and 235 to 255 (VGAA…GWAG). Positions 256–321 (VYTTLDKKKD…MLKLVDNAID (66 aa)) form a coiled coil.

It belongs to the UPF0496 family.

The protein localises to the membrane. The polypeptide is UPF0496 protein At3g28270 (Arabidopsis thaliana (Mouse-ear cress)).